We begin with the raw amino-acid sequence, 671 residues long: tRNA 5-methylaminomethyl-2-thiouridine biosynthesis bifunctional protein MnmC (671 aa).

The interval M1 to P245 is tRNA (mnm(5)s(2)U34)-methyltransferase. An FAD-dependent cmnm(5)s(2)U34 oxidoreductase region spans residues V272–E671.

The protein in the N-terminal section; belongs to the methyltransferase superfamily. tRNA (mnm(5)s(2)U34)-methyltransferase family. In the C-terminal section; belongs to the DAO family. FAD serves as cofactor.

It is found in the cytoplasm. The enzyme catalyses 5-aminomethyl-2-thiouridine(34) in tRNA + S-adenosyl-L-methionine = 5-methylaminomethyl-2-thiouridine(34) in tRNA + S-adenosyl-L-homocysteine + H(+). Its function is as follows. Catalyzes the last two steps in the biosynthesis of 5-methylaminomethyl-2-thiouridine (mnm(5)s(2)U) at the wobble position (U34) in tRNA. Catalyzes the FAD-dependent demodification of cmnm(5)s(2)U34 to nm(5)s(2)U34, followed by the transfer of a methyl group from S-adenosyl-L-methionine to nm(5)s(2)U34, to form mnm(5)s(2)U34. In Actinobacillus pleuropneumoniae serotype 5b (strain L20), this protein is tRNA 5-methylaminomethyl-2-thiouridine biosynthesis bifunctional protein MnmC.